The chain runs to 283 residues: Poly(3-hydroxyalkanoate) depolymerase (283 aa).

An AB hydrolase-1 domain is found at 30–253 (PLLIFNGIGA…IDDGHLFLIT (224 aa)). Serine 102 acts as the Charge relay system in catalysis.

This sequence belongs to the AB hydrolase superfamily. Lipase family.

Complements a mutant that does not degrade PHA; might be a lipase. In Ectopseudomonas oleovorans (Pseudomonas oleovorans), this protein is Poly(3-hydroxyalkanoate) depolymerase.